Here is a 288-residue protein sequence, read N- to C-terminus: GCN5-related N-acetyltransferase 6, chloroplastic (288 aa).

A chloroplast-targeting transit peptide spans 1-111 (MSTISIHRTE…YWTAAWLRAE (111 aa)). The region spanning 151–288 (SCIVAVKKEE…DDTYLLQYTS (138 aa)) is the N-acetyltransferase domain. Residues 215-217 (LCV), 223-228 (RQGIAC), 254-256 (NSV), and Tyr261 contribute to the acetyl-CoA site. Tyr261 acts as the Proton donor in catalysis.

It belongs to the acetyltransferase family. GNAT subfamily. Oligomer. Autoacetylated. As to expression, expressed in green tissues and in roots.

It is found in the plastid. It localises to the chloroplast. Its subcellular location is the cytoplasm. The protein localises to the perinuclear region. The catalysed reaction is an N-terminal L-alpha-aminoacyl-[protein] + acetyl-CoA = N-terminal N(alpha)-acetyl-L-alpha-aminoacyl-[protein] + CoA + H(+). It catalyses the reaction L-lysyl-[protein] + acetyl-CoA = N(6)-acetyl-L-lysyl-[protein] + CoA + H(+). It carries out the reaction N-terminal L-alanyl-[protein] + acetyl-CoA = N-terminal N(alpha)-acetyl-L-alanyl-[protein] + CoA + H(+). The enzyme catalyses N-terminal L-seryl-[protein] + acetyl-CoA = N-terminal N(alpha)-acetyl-L-seryl-[protein] + CoA + H(+). The catalysed reaction is N-terminal L-threonyl-[protein] + acetyl-CoA = N-terminal N(alpha)-acetyl-L-threonyl-[protein] + CoA + H(+). It catalyses the reaction N-terminal L-methionyl-[protein] + acetyl-CoA = N-terminal N(alpha)-acetyl-L-methionyl-[protein] + CoA + H(+). It carries out the reaction N-terminal L-valyl-[protein] + acetyl-CoA = N-terminal N(alpha)-acetyl-L-valyl-[protein] + CoA + H(+). Protein acetyltransferase with dual specificity triggering both N-alpha-acetylation (NTA), with a large spectrum of modified N-termini, including methionine, alanine, serine, threonine and to a lower extent valine as substrates, and epsilon-lysine acetylation (KA). The protein is GCN5-related N-acetyltransferase 6, chloroplastic of Arabidopsis thaliana (Mouse-ear cress).